The following is a 247-amino-acid chain: Enolase-phosphatase E1 (247 aa).

Residues D12 and E14 each coordinate Mg(2+). Substrate contacts are provided by residues 141–142 (SS) and K175. D200 is a binding site for Mg(2+).

The protein belongs to the HAD-like hydrolase superfamily. MasA/MtnC family. As to quaternary structure, monomer. Requires Mg(2+) as cofactor.

The protein resides in the cytoplasm. It is found in the nucleus. It carries out the reaction 5-methylsulfanyl-2,3-dioxopentyl phosphate + H2O = 1,2-dihydroxy-5-(methylsulfanyl)pent-1-en-3-one + phosphate. Its pathway is amino-acid biosynthesis; L-methionine biosynthesis via salvage pathway; L-methionine from S-methyl-5-thio-alpha-D-ribose 1-phosphate: step 3/6. The protein operates within amino-acid biosynthesis; L-methionine biosynthesis via salvage pathway; L-methionine from S-methyl-5-thio-alpha-D-ribose 1-phosphate: step 4/6. In terms of biological role, bifunctional enzyme that catalyzes the enolization of 2,3-diketo-5-methylthiopentyl-1-phosphate (DK-MTP-1-P) into the intermediate 2-hydroxy-3-keto-5-methylthiopentenyl-1-phosphate (HK-MTPenyl-1-P), which is then dephosphorylated to form the acireductone 1,2-dihydroxy-3-keto-5-methylthiopentene (DHK-MTPene). The polypeptide is Enolase-phosphatase E1 (Drosophila willistoni (Fruit fly)).